The chain runs to 538 residues: Furcatin hydrolase (538 aa).

Residues 1 to 66 (MATITTLASS…NFNKDNWLAS (66 aa)) constitute a chloroplast transit peptide. Residues 18 to 37 (SFPGGSSRKPKKDNLSIKPP) are disordered. Residues Gln-88, His-192, and 237-238 (NE) contribute to the a beta-D-glucoside site. Catalysis depends on Glu-238, which acts as the Proton donor. The cysteines at positions 257 and 260 are disulfide-linked. Residues Tyr-376, Glu-447, Trp-494, 501-502 (EW), and Phe-510 each bind a beta-D-glucoside. The active-site Nucleophile is the Glu-447.

Belongs to the glycosyl hydrolase 1 family. In terms of tissue distribution, expressed in young and mature leaves, but not in fruit and stem.

The protein resides in the plastid. It localises to the chloroplast. It catalyses the reaction 7-[beta-D-apiofuranosyl-(1-&gt;6)-beta-D-glucopyranosyloxy]isoflavonoid + H2O = a 7-hydroxyisoflavonoid + beta-D-apiofuranosyl-(1-&gt;6)-D-glucose.. Its function is as follows. Disaccharide-specific acuminosidase, hydrolyzes the beta-glycosidic bond between p-allylphenol and acuminose with retention of anomeric configuration. Has highest activity towards furcatin, and lower activity towards beta-primeverosides and beta-vicianoside. Has very low activity towards beta-gentobiosides. The chain is Furcatin hydrolase from Viburnum furcatum (Scarlet leaved viburnum).